The following is an 807-amino-acid chain: 1,4-alpha-glucan branching enzyme GlgB (807 aa).

Asp-405 acts as the Nucleophile in catalysis. Glu-458 (proton donor) is an active-site residue.

The protein belongs to the glycosyl hydrolase 13 family. GlgB subfamily. In terms of assembly, monomer.

It catalyses the reaction Transfers a segment of a (1-&gt;4)-alpha-D-glucan chain to a primary hydroxy group in a similar glucan chain.. It functions in the pathway glycan biosynthesis; glycogen biosynthesis. In terms of biological role, catalyzes the formation of the alpha-1,6-glucosidic linkages in glycogen by scission of a 1,4-alpha-linked oligosaccharide from growing alpha-1,4-glucan chains and the subsequent attachment of the oligosaccharide to the alpha-1,6 position. The chain is 1,4-alpha-glucan branching enzyme GlgB from Histophilus somni (strain 129Pt) (Haemophilus somnus).